Consider the following 126-residue polypeptide: Large ribosomal subunit protein bL12 (126 aa).

The protein belongs to the bacterial ribosomal protein bL12 family. As to quaternary structure, homodimer. Part of the ribosomal stalk of the 50S ribosomal subunit. Forms a multimeric L10(L12)X complex, where L10 forms an elongated spine to which 2 to 4 L12 dimers bind in a sequential fashion. Binds GTP-bound translation factors.

Functionally, forms part of the ribosomal stalk which helps the ribosome interact with GTP-bound translation factors. Is thus essential for accurate translation. This Bifidobacterium longum subsp. infantis (strain ATCC 15697 / DSM 20088 / JCM 1222 / NCTC 11817 / S12) protein is Large ribosomal subunit protein bL12.